Reading from the N-terminus, the 370-residue chain is tRNA-specific 2-thiouridylase MnmA (370 aa).

Residues Gly-9–Ser-16 and Met-35 contribute to the ATP site. The interval Asn-95–Asp-97 is interaction with target base in tRNA. Residue Cys-100 is the Nucleophile of the active site. Residues Cys-100 and Cys-196 are joined by a disulfide bond. Gly-124 is an ATP binding site. The tract at residues Lys-146–Gln-148 is interaction with tRNA. The active-site Cysteine persulfide intermediate is the Cys-196. Residues Arg-308–Tyr-309 are interaction with tRNA.

This sequence belongs to the MnmA/TRMU family.

It localises to the cytoplasm. The catalysed reaction is S-sulfanyl-L-cysteinyl-[protein] + uridine(34) in tRNA + AH2 + ATP = 2-thiouridine(34) in tRNA + L-cysteinyl-[protein] + A + AMP + diphosphate + H(+). Its function is as follows. Catalyzes the 2-thiolation of uridine at the wobble position (U34) of tRNA, leading to the formation of s(2)U34. This Ralstonia pickettii (strain 12J) protein is tRNA-specific 2-thiouridylase MnmA.